Consider the following 372-residue polypeptide: MNNEETFYQAMRRQGVTRRSFLKYCSLAATSLGLGAGMAPKIAWALENKPRIPVVWIHGLECTCCTESFIRSAHPLAKDVILSLISLDYDDTLMAAAGTQAEEVFEDIITQYNGKYILAVEGNPPLGEQGMFCISSGRPFIEKLKRAAAGASAIIAWGTCASWGCVQAARPNPTQATPIDKVITDKPIIKVPGCPPIPDVMSAIITYMVTFDRLPDVDRMGRPLMFYGQRIHDKCYRRAHFDAGEFVQSWDDDAARKGYCLYKMGCKGPTTYNACSSTRWNDGVSFPIQSGHGCLGCAENGFWDRGSFYSRVVDIPQMGTHSTADTVGLTALGVVAAAVGVHAVASAVDQRRRHNQQPTETEHQPGNEDKQA.

A signal peptide (tat-type signal) is located at residues 1–45; sequence MNNEETFYQAMRRQGVTRRSFLKYCSLAATSLGLGAGMAPKIAWA. The Periplasmic segment spans residues 46-326; it reads LENKPRIPVV…QMGTHSTADT (281 aa). 8 residues coordinate [4Fe-4S] cluster: Cys62, Cys65, Cys160, Cys194, His232, Cys235, Cys260, and Cys266. [3Fe-4S] cluster is bound by residues Cys275, Cys294, and Cys297. Residues 327-347 traverse the membrane as a helical segment; sequence VGLTALGVVAAAVGVHAVASA. Residues 347–372 form a disordered region; the sequence is AVDQRRRHNQQPTETEHQPGNEDKQA. Residues 348-372 are Cytoplasmic-facing; it reads VDQRRRHNQQPTETEHQPGNEDKQA. Basic and acidic residues predominate over residues 360-372; that stretch reads ETEHQPGNEDKQA.

The protein belongs to the [NiFe]/[NiFeSe] hydrogenase small subunit family. In terms of assembly, heterodimer of a large and a small subunit. [4Fe-4S] cluster serves as cofactor. It depends on [3Fe-4S] cluster as a cofactor. Post-translationally, predicted to be exported by the Tat system. The position of the signal peptide cleavage has not been experimentally proven.

It is found in the cell inner membrane. It carries out the reaction H2 + A = AH2. Functionally, this is one of three E.coli hydrogenases synthesized in response to different physiological conditions. HYD1 is believed to have a role in hydrogen cycling during fermentative growth. The sequence is that of Hydrogenase-1 small chain (hyaA) from Escherichia coli O6:H1 (strain CFT073 / ATCC 700928 / UPEC).